Here is a 518-residue protein sequence, read N- to C-terminus: Bifunctional methyltransferase (518 aa).

Residues 1 to 300 (MQYSIKQILS…SHNRVIEISP (300 aa)) are hemK. Positions 1 to 302 (MQYSIKQILS…NRVIEISPIN (302 aa)) are RF MTase. Residues 140–144 (GTGSG), D163, W192, N207, E347, E372, N399, and D421 contribute to the S-adenosyl-L-methionine site. Residue 207-210 (NPPY) coordinates substrate. A tRNA (guanine-N(7)-)-methyltransferase region spans residues 301-518 (INLNRSYARR…MILQHALTDH (218 aa)). The segment at 305–518 (RSYARRIGKS…MILQHALTDH (214 aa)) is tRNA MTase. The active site involves D421. Substrate-binding residues include K425 and D457.

This sequence in the C-terminal section; belongs to the class I-like SAM-binding methyltransferase superfamily. TrmB family. The protein in the N-terminal section; belongs to the protein N5-glutamine methyltransferase family. PrmC subfamily.

The enzyme catalyses L-glutaminyl-[peptide chain release factor] + S-adenosyl-L-methionine = N(5)-methyl-L-glutaminyl-[peptide chain release factor] + S-adenosyl-L-homocysteine + H(+). It catalyses the reaction guanosine(46) in tRNA + S-adenosyl-L-methionine = N(7)-methylguanosine(46) in tRNA + S-adenosyl-L-homocysteine. Functionally, methylates the class 1 translation termination release factors RF1/PrfA and RF2/PrfB on the glutamine residue of the universally conserved GGQ motif. Its function is as follows. Catalyzes the formation of N(7)-methylguanine at position 46 (m7G46) in tRNA. The chain is Bifunctional methyltransferase (prmC/trmB) from Rickettsia prowazekii (strain Madrid E).